The chain runs to 168 residues: Thiosulfate dehydrogenase [quinone] small subunit (168 aa).

A helical transmembrane segment spans residues 6-26 (IIGIIFAILVVGWILATGQWA).

In terms of assembly, heterodimer of a large and a small subunit in a 2:2 stoichiometry. TQO may associate with the terminal oxidase formed by doxBCE. The N-terminus is blocked. In terms of processing, glycosylated.

The protein resides in the cell membrane. It catalyses the reaction 6-decylubiquinone + 2 thiosulfate = 6-decylubiquinol + tetrathionate. Its activity is regulated as follows. Inhibited by sulfite, metabisulfite and dithonite. Functionally, TQO plays a role in sulfur oxidation and is proposed to couple sulfur oxidation to dioxygen reduction; caldariellaquinone or sulfolobus quinone seem to serve to transfer electrons to the electron transport chain terminal oxidase formed by DoxBCE. The polypeptide is Thiosulfate dehydrogenase [quinone] small subunit (doxA) (Acidianus ambivalens (Desulfurolobus ambivalens)).